The primary structure comprises 169 residues: MSSEIAYSNTNTNTENENRNTGAGVDVNTNANANANATANATANATANATAELNLPTVDEQRQYKVQLLLHINSILLARVIQMNNSLQNNLQNNINNSNNNNIIRIQQLISQFLKRVHANLQCISQINQGVPSAKPLILTPPQLANQQQPPQDILSKLYLLLARVFEIW.

The interval 1–24 (MSSEIAYSNTNTNTENENRNTGAG) is disordered. Serine 2 bears the N-acetylserine mark. The segment covering 9 to 21 (NTNTNTENENRNT) has biased composition (low complexity). Repeat copies occupy residues 28–31 (NTNA), 32–35 (NANA), 36–39 (NATA), 40–43 (NATA), 44–47 (NATA), 48–51 (NATA), 76–80 (LLARV), and 160–165 (LLLARV). A 6 X 4 AA tandem repeats of N-[AT]-[NT]-A region spans residues 28-51 (NTNANANANATANATANATANATA). Residues 76–165 (LLARVIQMNN…SKLYLLLARV (90 aa)) form a 2 X 5 AA repeats of L-L-A-R-V region.

In terms of assembly, component of the SWI/SNF global transcription activator complex. The 1.14 MDa SWI/SNF complex is composed of 11 different subunits: one copy each of SWI1, SNF2/SWI2, SNF5, SNF12/SWP73, ARP7/SWP61, ARP9/SWP59; two copies each of SWI3, SNF6, SNF11, SWP82; and three copies of TAF14/SWP29.

The protein localises to the nucleus. Its function is as follows. Involved in transcriptional activation. Component of the SWI/SNF complex, an ATP-dependent chromatin remodeling complex, which is required for the positive and negative regulation of gene expression of a large number of genes. It changes chromatin structure by altering DNA-histone contacts within a nucleosome, leading eventually to a change in nucleosome position, thus facilitating or repressing binding of gene-specific transcription factors. This Saccharomyces cerevisiae (strain ATCC 204508 / S288c) (Baker's yeast) protein is Transcription regulatory protein SNF11 (SNF11).